We begin with the raw amino-acid sequence, 117 residues long: Large ribosomal subunit protein uL18 (117 aa).

The protein belongs to the universal ribosomal protein uL18 family. As to quaternary structure, part of the 50S ribosomal subunit; part of the 5S rRNA/L5/L18/L25 subcomplex. Contacts the 5S and 23S rRNAs.

This is one of the proteins that bind and probably mediate the attachment of the 5S RNA into the large ribosomal subunit, where it forms part of the central protuberance. The sequence is that of Large ribosomal subunit protein uL18 from Alkalilimnicola ehrlichii (strain ATCC BAA-1101 / DSM 17681 / MLHE-1).